The sequence spans 215 residues: Cytochrome b6 (215 aa).

A helical transmembrane segment spans residues Ile32–Phe52. Cys35 contributes to the heme c binding site. Heme b contacts are provided by His86 and His100. A run of 3 helical transmembrane segments spans residues Ala90 to Phe110, Leu116 to Tyr136, and Leu186 to Ile206. Heme b is bound by residues His187 and His202.

The protein belongs to the cytochrome b family. PetB subfamily. As to quaternary structure, the 4 large subunits of the cytochrome b6-f complex are cytochrome b6, subunit IV (17 kDa polypeptide, PetD), cytochrome f and the Rieske protein, while the 4 small subunits are PetG, PetL, PetM and PetN. The complex functions as a dimer. Heme b serves as cofactor. The cofactor is heme c.

It localises to the plastid. The protein resides in the chloroplast thylakoid membrane. Component of the cytochrome b6-f complex, which mediates electron transfer between photosystem II (PSII) and photosystem I (PSI), cyclic electron flow around PSI, and state transitions. The sequence is that of Cytochrome b6 from Huperzia lucidula (Shining clubmoss).